A 77-amino-acid polypeptide reads, in one-letter code: Acyl carrier protein (77 aa).

Residues 2–77 form the Carrier domain; sequence AEVLEKVTKI…DAVKYIEANA (76 aa). S37 bears the O-(pantetheine 4'-phosphoryl)serine mark.

The protein belongs to the acyl carrier protein (ACP) family. In terms of processing, 4'-phosphopantetheine is transferred from CoA to a specific serine of apo-ACP by AcpS. This modification is essential for activity because fatty acids are bound in thioester linkage to the sulfhydryl of the prosthetic group.

The protein localises to the cytoplasm. It participates in lipid metabolism; fatty acid biosynthesis. In terms of biological role, carrier of the growing fatty acid chain in fatty acid biosynthesis. This Listeria innocua serovar 6a (strain ATCC BAA-680 / CLIP 11262) protein is Acyl carrier protein.